Consider the following 377-residue polypeptide: Testis-expressed protein 13A (377 aa).

The interval 92-377 (WLQDLSSLHK…CGKGIWLQNP (286 aa)) is required for repression of transcription. A coiled-coil region spans residues 122–156 (QKEVALQLQMAQAKLEEVQRERDLLRLKILQAELR). The LRR repeat unit spans residues 142-165 (ERDLLRLKILQAELRALPNAVRPA). The RanBP2-type zinc finger occupies 345–369 (RPGDWDCPWCKAVNFSRRENCFHCG). Cys-351, Cys-354, Cys-365, and Cys-368 together coordinate Zn(2+).

This sequence belongs to the TEX13 family. In terms of assembly, interacts with CNOT1; the interaction may inhibit CNOT1 binding to mRNA and subsequently CNOT1-mediated mRNA degradation.

In terms of biological role, binds to ssRNA containing the consensus sequence 5'-AGGUAA-3'. Plays a role in transcriptional repression. Required for rapid sperm motility and timely degradation of mRNA via its interaction with CNOT1. This is Testis-expressed protein 13A from Mus musculus (Mouse).